The chain runs to 204 residues: NNYCKIKCLKGGVHTACKYGSLKPNCGNKKVVSYGLTKQEKQDILKEHNDFRQKIARGLETRGNPGPQPPAKNMKNLVWSDELAYIAQVWANQCQYGHDTCRDVAKYQVGQNVALTGSTAAVYNDPVKLVKMWEDEVKDYNPKKKFSENNFLKIGHYTQMVWANTKEVGCGSIKYIQENWHKHYLVCNYGPSGNFQNEELYQTK.

4 disulfide bridges follow: C4–C17, C8–C101, C26–C94, and C170–C187. Positions 45 to 189 (LKEHNDFRQK…WHKHYLVCNY (145 aa)) constitute an SCP domain.

The protein belongs to the CRISP family. Venom allergen 5-like subfamily. As to expression, expressed by the venom gland.

Its subcellular location is the secreted. This chain is Venom allergen 5, found in Vespula maculifrons (Eastern yellow jacket).